The following is an 882-amino-acid chain: MNAPAKFSTSQIRSDFLAFFEGRGHTIVPSAPLVPGNDPTLLFTNSGMVQFKDVFLGAEKRSYVRAADVQRCLRAGGKHNDLDSVGYTARHHTFFEMLGNWSFGDYFKKDAIAWAWELLTQIWKLPTDRLLVTVYHTDEEAFALWRDMIGIPESRIVRIGDNKGAPYASDNFWQMADTGPCGPCTEIFFDHGDHIAGGPPGSPDEDGDRFIEIWNLVFMQFDRQPDGTLVPLPAPCVDTGMGLERLAAILQHVHTNYEIDLFQALIGKASALTGITDLENKSLRVIADHIRACSFLIVDGVLPSNEGRGYVLRRIIRRALRHGWMLGVRQPFFSKMVPTLVELMGEAYPELVVAKDTVARALLAEEERFAETLDAGMKIFDEVASRSQDIIPGADAFRLYDTYGFPVDLTADIARERGMRVDMEGFECAMERQRETARAAGKFGGGVALPADLVASMSPTVFLGYEAYDADALRVVALLKQGRPVERAQAGDEVIVFTDRTPFYAESGGQVGDSGQLNGPGVLIEVADTQKFAGQFHGHVGRISEGTLALGDVLAGGIDVQRRGKTILNHSATHLLHAALREVLGTHVQQKGSLVAPDRLRFDFSHFQPITADELAVIERKVNAEVRTNHGVEVHNMAMQEALDFGAMALFGEKYGENVRVLKMGGYSTELCGGTHVTRTGDIGLFKITSEGGVSSGVRRIEAVTGQGALDYVADEERRLLEAAHLLGGNATEVVDKVRALTERQKRLQRELESLKAKLASGATADLGAAAIDVAGVKVVAVRLEGFDAKALRDAMDRLKQQLGDSVIVLAGASGGKVALVSGVNGSPTGKVKAGELLSNIASQIGGKGGGRPDLAQGGGEDGPALATALDGVPLWVKQHLG.

Zn(2+) contacts are provided by His-570, His-574, Cys-672, and His-676.

The protein belongs to the class-II aminoacyl-tRNA synthetase family. Zn(2+) is required as a cofactor.

Its subcellular location is the cytoplasm. The enzyme catalyses tRNA(Ala) + L-alanine + ATP = L-alanyl-tRNA(Ala) + AMP + diphosphate. Functionally, catalyzes the attachment of alanine to tRNA(Ala) in a two-step reaction: alanine is first activated by ATP to form Ala-AMP and then transferred to the acceptor end of tRNA(Ala). Also edits incorrectly charged Ser-tRNA(Ala) and Gly-tRNA(Ala) via its editing domain. This Xanthomonas oryzae pv. oryzae (strain MAFF 311018) protein is Alanine--tRNA ligase.